The chain runs to 300 residues: Type II restriction enzyme HindIII (300 aa).

The enzyme catalyses Endonucleolytic cleavage of DNA to give specific double-stranded fragments with terminal 5'-phosphates.. A P subtype restriction enzyme that recognizes the double-stranded sequence 5'-AAGCTT-3' and cleaves after A-1. The protein is Type II restriction enzyme HindIII of Haemophilus influenzae (strain ATCC 51907 / DSM 11121 / KW20 / Rd).